A 233-amino-acid polypeptide reads, in one-letter code: Glycerol-3-phosphate acyltransferase 5 (233 aa).

A run of 5 helical transmembrane segments spans residues 3-23 (LVFIIMAIAGYLVGAIPMAYL), 69-89 (MILLSGALGLALWQQIVVGLF), 116-136 (LVMAPVPALIALGTAIAFGLF), 143-163 (VFLGVAALPFMSGYFHGFFGI), and 168-188 (TISWGFIGIFLIMVTRRLMAP).

It belongs to the PlsY family. In terms of assembly, probably interacts with PlsX.

Its subcellular location is the cell membrane. It carries out the reaction an acyl phosphate + sn-glycerol 3-phosphate = a 1-acyl-sn-glycero-3-phosphate + phosphate. The protein operates within lipid metabolism; phospholipid metabolism. Catalyzes the transfer of an acyl group from acyl-phosphate (acyl-PO(4)) to glycerol-3-phosphate (G3P) to form lysophosphatidic acid (LPA). This enzyme utilizes acyl-phosphate as fatty acyl donor, but not acyl-CoA or acyl-ACP. This is Glycerol-3-phosphate acyltransferase 5 from Dehalococcoides mccartyi (strain ATCC BAA-2266 / KCTC 15142 / 195) (Dehalococcoides ethenogenes (strain 195)).